The sequence spans 474 residues: Light-independent protochlorophyllide reductase subunit N (474 aa).

[4Fe-4S] cluster-binding residues include C22, C47, and C107.

It belongs to the BchN/ChlN family. Protochlorophyllide reductase is composed of three subunits; ChlL, ChlN and ChlB. Forms a heterotetramer of two ChlB and two ChlN subunits. It depends on [4Fe-4S] cluster as a cofactor.

It is found in the plastid. Its subcellular location is the chloroplast. It catalyses the reaction chlorophyllide a + oxidized 2[4Fe-4S]-[ferredoxin] + 2 ADP + 2 phosphate = protochlorophyllide a + reduced 2[4Fe-4S]-[ferredoxin] + 2 ATP + 2 H2O. It functions in the pathway porphyrin-containing compound metabolism; chlorophyll biosynthesis (light-independent). Its function is as follows. Component of the dark-operative protochlorophyllide reductase (DPOR) that uses Mg-ATP and reduced ferredoxin to reduce ring D of protochlorophyllide (Pchlide) to form chlorophyllide a (Chlide). This reaction is light-independent. The NB-protein (ChlN-ChlB) is the catalytic component of the complex. This is Light-independent protochlorophyllide reductase subunit N from Physcomitrium patens (Spreading-leaved earth moss).